The chain runs to 133 residues: Small ribosomal subunit protein uS8 (133 aa).

The protein belongs to the universal ribosomal protein uS8 family. As to quaternary structure, part of the 30S ribosomal subunit. Contacts proteins S5 and S12.

Its function is as follows. One of the primary rRNA binding proteins, it binds directly to 16S rRNA central domain where it helps coordinate assembly of the platform of the 30S subunit. This chain is Small ribosomal subunit protein uS8, found in Thermosynechococcus vestitus (strain NIES-2133 / IAM M-273 / BP-1).